Reading from the N-terminus, the 205-residue chain is ATP phosphoribosyltransferase (205 aa).

It belongs to the ATP phosphoribosyltransferase family. Short subfamily. As to quaternary structure, heteromultimer composed of HisG and HisZ subunits.

The protein resides in the cytoplasm. It catalyses the reaction 1-(5-phospho-beta-D-ribosyl)-ATP + diphosphate = 5-phospho-alpha-D-ribose 1-diphosphate + ATP. It functions in the pathway amino-acid biosynthesis; L-histidine biosynthesis; L-histidine from 5-phospho-alpha-D-ribose 1-diphosphate: step 1/9. Its function is as follows. Catalyzes the condensation of ATP and 5-phosphoribose 1-diphosphate to form N'-(5'-phosphoribosyl)-ATP (PR-ATP). Has a crucial role in the pathway because the rate of histidine biosynthesis seems to be controlled primarily by regulation of HisG enzymatic activity. In Ruthia magnifica subsp. Calyptogena magnifica, this protein is ATP phosphoribosyltransferase.